The sequence spans 224 residues: Cytidylate kinase (224 aa).

9 to 17 (GPSGVGKGT) provides a ligand contact to ATP.

The protein belongs to the cytidylate kinase family. Type 1 subfamily.

It is found in the cytoplasm. It catalyses the reaction CMP + ATP = CDP + ADP. It carries out the reaction dCMP + ATP = dCDP + ADP. The chain is Cytidylate kinase from Dichelobacter nodosus (strain VCS1703A).